Consider the following 192-residue polypeptide: Large ribosomal subunit protein uL3 (192 aa).

Belongs to the universal ribosomal protein uL3 family. In terms of assembly, part of the 50S ribosomal subunit. Forms a cluster with proteins L14 and L19.

Its function is as follows. One of the primary rRNA binding proteins, it binds directly near the 3'-end of the 23S rRNA, where it nucleates assembly of the 50S subunit. The protein is Large ribosomal subunit protein uL3 (rplC) of Wolinella succinogenes (strain ATCC 29543 / DSM 1740 / CCUG 13145 / JCM 31913 / LMG 7466 / NCTC 11488 / FDC 602W) (Vibrio succinogenes).